A 229-amino-acid polypeptide reads, in one-letter code: Large ribosomal subunit protein uL1 (229 aa).

This sequence belongs to the universal ribosomal protein uL1 family. Part of the 50S ribosomal subunit.

Functionally, binds directly to 23S rRNA. The L1 stalk is quite mobile in the ribosome, and is involved in E site tRNA release. In terms of biological role, protein L1 is also a translational repressor protein, it controls the translation of the L11 operon by binding to its mRNA. This is Large ribosomal subunit protein uL1 from Lacticaseibacillus casei (strain BL23) (Lactobacillus casei).